The sequence spans 319 residues: Phosphoenolpyruvate transferase (319 aa).

Asp-50 is a binding site for 7,8-didemethyl-8-hydroxy-5-deazariboflavin.

This sequence belongs to the CofD family. In terms of assembly, homodimer. Mg(2+) is required as a cofactor.

The catalysed reaction is enolpyruvoyl-2-diphospho-5'-guanosine + 7,8-didemethyl-8-hydroxy-5-deazariboflavin = dehydro coenzyme F420-0 + GMP + H(+). Its pathway is cofactor biosynthesis; coenzyme F420 biosynthesis. In terms of biological role, catalyzes the transfer of the phosphoenolpyruvate moiety from enoylpyruvoyl-2-diphospho-5'-guanosine (EPPG) to 7,8-didemethyl-8-hydroxy-5-deazariboflavin (FO) with the formation of dehydro coenzyme F420-0 and GMP. In Streptomyces avermitilis (strain ATCC 31267 / DSM 46492 / JCM 5070 / NBRC 14893 / NCIMB 12804 / NRRL 8165 / MA-4680), this protein is Phosphoenolpyruvate transferase.